A 565-amino-acid chain; its full sequence is Sulfite reductase [NADPH] hemoprotein beta-component (565 aa).

4 residues coordinate [4Fe-4S] cluster: cysteine 429, cysteine 435, cysteine 474, and cysteine 478. Cysteine 478 contributes to the siroheme binding site.

The protein belongs to the nitrite and sulfite reductase 4Fe-4S domain family. Alpha(8)-beta(8). The alpha component is a flavoprotein, the beta component is a hemoprotein. Siroheme is required as a cofactor. The cofactor is [4Fe-4S] cluster.

The catalysed reaction is hydrogen sulfide + 3 NADP(+) + 3 H2O = sulfite + 3 NADPH + 4 H(+). It functions in the pathway sulfur metabolism; hydrogen sulfide biosynthesis; hydrogen sulfide from sulfite (NADPH route): step 1/1. In terms of biological role, component of the sulfite reductase complex that catalyzes the 6-electron reduction of sulfite to sulfide. This is one of several activities required for the biosynthesis of L-cysteine from sulfate. This chain is Sulfite reductase [NADPH] hemoprotein beta-component, found in Shewanella baltica (strain OS155 / ATCC BAA-1091).